The sequence spans 968 residues: RNA polymerase-associated protein RapA (968 aa).

The 171-residue stretch at 164-334 folds into the Helicase ATP-binding domain; it reads DVGRRHAPRV…FARLRLLDPN (171 aa). Position 177 to 184 (177 to 184) interacts with ATP; the sequence is DEVGLGKT. The DEAH box signature appears at 280-283; sequence DEAH. The region spanning 490-685 is the Helicase C-terminal domain; the sequence is RVEWLMGYLT…ALKAQLEQGR (196 aa).

It belongs to the SNF2/RAD54 helicase family. RapA subfamily. Interacts with the RNAP. Has a higher affinity for the core RNAP than for the holoenzyme. Its ATPase activity is stimulated by binding to RNAP.

Functionally, transcription regulator that activates transcription by stimulating RNA polymerase (RNAP) recycling in case of stress conditions such as supercoiled DNA or high salt concentrations. Probably acts by releasing the RNAP, when it is trapped or immobilized on tightly supercoiled DNA. Does not activate transcription on linear DNA. Probably not involved in DNA repair. In Salmonella newport (strain SL254), this protein is RNA polymerase-associated protein RapA.